The chain runs to 232 residues: MSLFNTVRNTIVPVHKEGYPFVAAFFVASLILGWIFKPLFWIGMIFTLWCAYFFRDPERVTPQDDDLVISPADGKVSAIQMVTPPAELDLGSEPMLRISVFMNVFNCHVNRAPMRGRIVSINYRSGSFVNAELDKASEDNERNGLVIETKHGQIGVVQIAGLVARRILCWANTNEPMDAGERFGLIRFGSRLDVFLPAGAAPRVSLGQTAIAGETVIAEFASAKGPVISRRS.

Ser-190 functions as the Schiff-base intermediate with substrate; via pyruvic acid in the catalytic mechanism. Pyruvic acid (Ser); by autocatalysis is present on Ser-190.

It belongs to the phosphatidylserine decarboxylase family. PSD-A subfamily. As to quaternary structure, heterodimer of a large membrane-associated beta subunit and a small pyruvoyl-containing alpha subunit. Pyruvate serves as cofactor. In terms of processing, is synthesized initially as an inactive proenzyme. Formation of the active enzyme involves a self-maturation process in which the active site pyruvoyl group is generated from an internal serine residue via an autocatalytic post-translational modification. Two non-identical subunits are generated from the proenzyme in this reaction, and the pyruvate is formed at the N-terminus of the alpha chain, which is derived from the carboxyl end of the proenzyme. The post-translation cleavage follows an unusual pathway, termed non-hydrolytic serinolysis, in which the side chain hydroxyl group of the serine supplies its oxygen atom to form the C-terminus of the beta chain, while the remainder of the serine residue undergoes an oxidative deamination to produce ammonia and the pyruvoyl prosthetic group on the alpha chain.

The protein localises to the cell membrane. The enzyme catalyses a 1,2-diacyl-sn-glycero-3-phospho-L-serine + H(+) = a 1,2-diacyl-sn-glycero-3-phosphoethanolamine + CO2. The protein operates within phospholipid metabolism; phosphatidylethanolamine biosynthesis; phosphatidylethanolamine from CDP-diacylglycerol: step 2/2. Catalyzes the formation of phosphatidylethanolamine (PtdEtn) from phosphatidylserine (PtdSer). This is Phosphatidylserine decarboxylase proenzyme from Rhizobium etli (strain CIAT 652).